The chain runs to 189 residues: MRKMNLIVAMDAEGGIGKNGVLPWRIKKDMQYFASVTKNVSDQSKRNAVLMGRKCWESIPVTRRPLAGRLNIVLSRQLPAQKSDDYIVVNSLEAAMKLLSEPPFVDSIETIWNIGGAEIYDLALRENLVDEIHLTRIFKNFEADVHLKSLDFSKMEKVQNAEVSSENSEIFEENGLKFEFCKWKVVENH.

Residues 3–185 (KMNLIVAMDA…LKFEFCKWKV (183 aa)) enclose the DHFR domain. NADP(+) contacts are provided by residues Ala-9 and 15-21 (GIGKNGV). 29 to 34 (DMQYFA) provides a ligand contact to substrate. 53-55 (RKC) lines the NADP(+) pocket. Arg-69 provides a ligand contact to substrate. Residues 75–77 (SRQ) and 115–122 (GGAEIYDL) each bind NADP(+).

It belongs to the dihydrofolate reductase family.

It carries out the reaction (6S)-5,6,7,8-tetrahydrofolate + NADP(+) = 7,8-dihydrofolate + NADPH + H(+). It functions in the pathway cofactor biosynthesis; tetrahydrofolate biosynthesis; 5,6,7,8-tetrahydrofolate from 7,8-dihydrofolate: step 1/1. Its function is as follows. Key enzyme in folate metabolism. Catalyzes an essential reaction for de novo glycine and purine synthesis, and for DNA precursor synthesis. This is Putative dihydrofolate reductase (dhfr-1) from Caenorhabditis elegans.